Reading from the N-terminus, the 366-residue chain is Left-right determination factor 1 (366 aa).

Positions 1 to 21 (MQPLWLCWALWVLPLASPGAA) are cleaved as a signal peptide. The propeptide at 22–76 (LTGEQLLGSLLRQLQLKEVPTLDRADMEELVIPTHVRAQYVALLQRSHGDRSRGK) is or 135. N-linked (GlcNAc...) asparagine glycosylation is present at Asn158. 4 disulfide bridges follow: Cys251–Cys264, Cys263–Cys316, Cys293–Cys351, and Cys297–Cys353.

The protein belongs to the TGF-beta family. The processing of the protein may also occur at the second R-X-X-R site located at AA 132-135. Processing appears to be regulated in a cell-type specific manner.

The protein localises to the secreted. In terms of biological role, required for left-right axis determination as a regulator of LEFTY2 and NODAL. In Homo sapiens (Human), this protein is Left-right determination factor 1 (LEFTY1).